The primary structure comprises 194 residues: Holliday junction branch migration complex subunit RuvA (194 aa).

The segment at 1–64 is domain I; that stretch reads MIGRLRGILA…EDSVSLYGFL (64 aa). Residues 65 to 140 form a domain II region; sequence REGERRLFRD…RAADFSSGAP (76 aa). Positions 140-144 are flexible linker; the sequence is PITGQ. The domain III stretch occupies residues 145–194; sequence LGPDAISEATVALQQLGYKPAEAARMARDAGAEGGEVATVIRKALQAALR.

Belongs to the RuvA family. Homotetramer. Forms an RuvA(8)-RuvB(12)-Holliday junction (HJ) complex. HJ DNA is sandwiched between 2 RuvA tetramers; dsDNA enters through RuvA and exits via RuvB. An RuvB hexamer assembles on each DNA strand where it exits the tetramer. Each RuvB hexamer is contacted by two RuvA subunits (via domain III) on 2 adjacent RuvB subunits; this complex drives branch migration. In the full resolvosome a probable DNA-RuvA(4)-RuvB(12)-RuvC(2) complex forms which resolves the HJ.

The protein localises to the cytoplasm. Functionally, the RuvA-RuvB-RuvC complex processes Holliday junction (HJ) DNA during genetic recombination and DNA repair, while the RuvA-RuvB complex plays an important role in the rescue of blocked DNA replication forks via replication fork reversal (RFR). RuvA specifically binds to HJ cruciform DNA, conferring on it an open structure. The RuvB hexamer acts as an ATP-dependent pump, pulling dsDNA into and through the RuvAB complex. HJ branch migration allows RuvC to scan DNA until it finds its consensus sequence, where it cleaves and resolves the cruciform DNA. This Xanthomonas oryzae pv. oryzae (strain MAFF 311018) protein is Holliday junction branch migration complex subunit RuvA.